A 254-amino-acid chain; its full sequence is Sensory rhodopsin (254 aa).

The Extracellular portion of the chain corresponds to 1-4 (MTGA). The helical transmembrane segment at 5-26 (VTSAYWLAAVAFLIGVGITAAL) threads the bilayer. At 27–35 (YAKLEGSRA) the chain is on the cytoplasmic side. Residues 36-57 (RTRLAALAVIPGFAGLSYVGMA) traverse the membrane as a helical segment. Topologically, residues 58–71 (LGIGTVTVNGAELV) are extracellular. Residues 72–93 (GLRYVDWVVTTPLLVGFIGYNA) traverse the membrane as a helical segment. The Cytoplasmic segment spans residues 94–96 (GAS). The helical transmembrane segment at 97-119 (RRAIAGVMIADALMIVFGAAAVV) threads the bilayer. The Extracellular portion of the chain corresponds to 120–123 (SGGT). The chain crosses the membrane as a helical span at residues 124-151 (LKWALFGVSALFHVSLFAYLYVIFPGGI). The Cytoplasmic portion of the chain corresponds to 152-154 (PDD). A helical transmembrane segment spans residues 155 to 182 (PMQRGLFSLLKNHVGLLWLAYPFVWLMG). Over 183-190 (PAGIGFTG) the chain is Extracellular. A helical membrane pass occupies residues 191-223 (AVGAALTYAFLDVLAKVPYVYFFYARRQAFIDV). K206 bears the N6-(retinylidene)lysine mark. Residues 224–254 (TDSRAAAKGDGPAVGGEAPVATGDDAPTAAD) lie on the Cytoplasmic side of the membrane. Positions 231–254 (KGDGPAVGGEAPVATGDDAPTAAD) are disordered.

Belongs to the archaeal/bacterial/fungal opsin family.

The protein resides in the cell membrane. Involved in the control of phototaxis. This Halorubrum sodomense protein is Sensory rhodopsin (sop).